Consider the following 74-residue polypeptide: Translation initiation factor IF-1 2 (74 aa).

The 73-residue stretch at Met1 to Arg73 folds into the S1-like domain.

Belongs to the IF-1 family. As to quaternary structure, component of the 30S ribosomal translation pre-initiation complex which assembles on the 30S ribosome in the order IF-2 and IF-3, IF-1 and N-formylmethionyl-tRNA(fMet); mRNA recruitment can occur at any time during PIC assembly.

It is found in the cytoplasm. One of the essential components for the initiation of protein synthesis. Stabilizes the binding of IF-2 and IF-3 on the 30S subunit to which N-formylmethionyl-tRNA(fMet) subsequently binds. Helps modulate mRNA selection, yielding the 30S pre-initiation complex (PIC). Upon addition of the 50S ribosomal subunit IF-1, IF-2 and IF-3 are released leaving the mature 70S translation initiation complex. In Streptomyces avermitilis (strain ATCC 31267 / DSM 46492 / JCM 5070 / NBRC 14893 / NCIMB 12804 / NRRL 8165 / MA-4680), this protein is Translation initiation factor IF-1 2.